The following is a 541-amino-acid chain: Beta-hexosaminidase 1 (541 aa).

The first 20 residues, 1-20, serve as a signal peptide directing secretion; sequence MSTNLLRLILLFITLSITSS. N-linked (GlcNAc...) asparagine glycosylation is found at Asn44 and Asn304. Cys295 and Cys337 are joined by a disulfide. Glu332 (proton donor) is an active-site residue. Residues Asn340, Asn352, and Asn497 are each glycosylated (N-linked (GlcNAc...) asparagine). Cys511 and Cys538 are oxidised to a cystine.

It belongs to the glycosyl hydrolase 20 family. Post-translationally, N-glycosylated. As to expression, expressed in roots, leaves, stems, flowers and siliques.

It is found in the vacuole. The enzyme catalyses Hydrolysis of terminal non-reducing N-acetyl-D-hexosamine residues in N-acetyl-beta-D-hexosaminides.. Inhibited by N-acetylcastanospermine, 2-acet-amido-1,2-dideoxynojirimycin and PUGNAc. Has a broad substrate specificity. Can use synthetic substrates such as pyridylaminated chitotriose, pyridylaminated chitobiose, p-nitrophenyl-beta-N-acetylglucosaminide, p-nitrophenyl-2-acetamido-2-deoxy-beta-D-glucopyranoside (pNP-GlcNAc), p-nitrophenyl-2-acetamido-2-deoxy-beta-D-galactopyranoside (pNP-GalNAc), 4-methylumbelliferyl-2-acetamido-2-deoxy-beta-D-glucopyranoside (MU-GlcNAc), and 4-methylumbelliferyl-6-sulfo-2-acetamido-2-deoxy-beta-D-glucopyranoside (MU-GlcNAc-6SO(4)) as substrates. Removes terminal GlcNAc residues from alpha1,3- and alpha1,6-mannosyl branches of biantennary N-glycans without any strict branch preference. Required for the presence of paucimannosidic N-glycans in glycoproteins of roots and, to a lower extent, of leaves. The chain is Beta-hexosaminidase 1 (HEXO1) from Arabidopsis thaliana (Mouse-ear cress).